The following is a 356-amino-acid chain: D-alanine--D-alanine ligase (356 aa).

One can recognise an ATP-grasp domain in the interval 134-339 (KQLFEHRGLP…YSDLITKLID (206 aa)). 167–222 (KDKLTYPVFVKPANLGSSVGISKCNNEDELKSGIEEAFQFDRKLVIEQGINAREVE) is a binding site for ATP. The Mg(2+) site is built by Asp293, Glu306, and Asn308.

Belongs to the D-alanine--D-alanine ligase family. Mg(2+) is required as a cofactor. It depends on Mn(2+) as a cofactor.

The protein resides in the cytoplasm. It catalyses the reaction 2 D-alanine + ATP = D-alanyl-D-alanine + ADP + phosphate + H(+). The protein operates within cell wall biogenesis; peptidoglycan biosynthesis. Its function is as follows. Cell wall formation. The polypeptide is D-alanine--D-alanine ligase (Staphylococcus haemolyticus (strain JCSC1435)).